Consider the following 952-residue polypeptide: Germ layers disorganized gldi-3 (952 aa).

Residues 39–100 (KSFGRATTND…NGTYINDRRL (62 aa)) enclose the FHA domain. Disordered regions lie at residues 174–220 (IGPR…MPST), 483–639 (GTPK…ESTV), and 652–866 (AAQS…KERC). Composition is skewed to polar residues over residues 179–195 (PSTT…STNG) and 202–220 (NRAS…MPST). The segment covering 523–537 (EESEILDVVGTDEPD) has biased composition (acidic residues). Positions 553-568 (PEDHGRQTQNKIDKNV) are enriched in basic and acidic residues. Composition is skewed to polar residues over residues 569–584 (RMSS…TPSA) and 600–620 (VTSS…NPVS). A compositionally biased stretch (low complexity) spans 662-679 (SVSNTTSSTSASLTTSSV). Residues 685 to 706 (TSSKENTDQKRAVDDSSDESAR) are compositionally biased toward basic and acidic residues. The span at 715–724 (SATPSSTPAE) shows a compositional bias: low complexity. Residues 725–742 (SSKRKQKDTSSRKMKQLD) show a composition bias toward basic and acidic residues. The segment covering 761–772 (TKRRDKARRSTR) has biased composition (basic residues). Over residues 789–800 (VEDEDETDDVQE) the composition is skewed to acidic residues. Basic and acidic residues-rich tracts occupy residues 823-832 (IKERKTKDKD) and 856-866 (PPKTEPSKERC).

It localises to the nucleus. Its function is as follows. Potential transcription factor that may play a role in the regulation of genes involved in cell cycle G1/S transition. May bind to regulatory elements of genes. This chain is Germ layers disorganized gldi-3, found in Caenorhabditis elegans.